An 82-amino-acid polypeptide reads, in one-letter code: uncharacterized protein (82 aa).

This is an uncharacterized protein from Pigeon circovirus (PiCV).